The following is a 131-amino-acid chain: Fumarate reductase subunit C (131 aa).

The next 3 helical transmembrane spans lie at 30–50, 57–77, and 109–129; these read EGTA…LFAL, WMGF…LIAL, and IIKG…YVAL.

This sequence belongs to the FrdC family. Part of an enzyme complex containing four subunits: a flavoprotein (FrdA), an iron-sulfur protein (FrdB), and two hydrophobic anchor proteins (FrdC and FrdD).

It is found in the cell inner membrane. Functionally, two distinct, membrane-bound, FAD-containing enzymes are responsible for the catalysis of fumarate and succinate interconversion; fumarate reductase is used in anaerobic growth, and succinate dehydrogenase is used in aerobic growth. Anchors the catalytic components of the fumarate reductase complex to the cell inner membrane, binds quinones. The chain is Fumarate reductase subunit C from Citrobacter koseri (strain ATCC BAA-895 / CDC 4225-83 / SGSC4696).